The chain runs to 260 residues: Small ribosomal subunit protein uS2 (260 aa).

It belongs to the universal ribosomal protein uS2 family.

The protein is Small ribosomal subunit protein uS2 of Roseobacter denitrificans (strain ATCC 33942 / OCh 114) (Erythrobacter sp. (strain OCh 114)).